We begin with the raw amino-acid sequence, 417 residues long: D-inositol 3-phosphate glycosyltransferase (417 aa).

H10 contributes to the 1D-myo-inositol 3-phosphate binding site. UDP-N-acetyl-alpha-D-glucosamine contacts are provided by residues 16-17 (QP) and G24. Residues 21-26 (DAGGMN), K79, Y112, T136, and R156 contribute to the 1D-myo-inositol 3-phosphate site. UDP-N-acetyl-alpha-D-glucosamine contacts are provided by R230, K235, and Q296. Residues Y305, R306, and A308 each contribute to the Mg(2+) site. E318 and E326 together coordinate UDP-N-acetyl-alpha-D-glucosamine. Residue T332 coordinates Mg(2+).

This sequence belongs to the glycosyltransferase group 1 family. MshA subfamily. In terms of assembly, homodimer.

It catalyses the reaction 1D-myo-inositol 3-phosphate + UDP-N-acetyl-alpha-D-glucosamine = 1D-myo-inositol 2-acetamido-2-deoxy-alpha-D-glucopyranoside 3-phosphate + UDP + H(+). Catalyzes the transfer of a N-acetyl-glucosamine moiety to 1D-myo-inositol 3-phosphate to produce 1D-myo-inositol 2-acetamido-2-deoxy-glucopyranoside 3-phosphate in the mycothiol biosynthesis pathway. This chain is D-inositol 3-phosphate glycosyltransferase, found in Actinosynnema mirum (strain ATCC 29888 / DSM 43827 / JCM 3225 / NBRC 14064 / NCIMB 13271 / NRRL B-12336 / IMRU 3971 / 101).